The following is a 168-amino-acid chain: MIVFYLSGDRVFSTDQNAINGLYNKRHFGKLVEGKLFLSLLEATYLVERGKIEVREGKRKLTVEELMNLGRERDELFDAKYLVYKDLRDRGYTVKSGLKFGSHFRVYRRGMDEHSQWLVWVLPENSRLSPNDITARVRVAHGVRKNMIMAIVDEDADVTYYKVEWVRF.

Active-site residues include Y107, H114, and K145.

The protein belongs to the tRNA-intron endonuclease family. Archaeal short subfamily. In terms of assembly, homotetramer; although the tetramer contains four active sites, only two participate in the cleavage. Therefore, it should be considered as a dimer of dimers.

The catalysed reaction is pretRNA = a 3'-half-tRNA molecule with a 5'-OH end + a 5'-half-tRNA molecule with a 2',3'-cyclic phosphate end + an intron with a 2',3'-cyclic phosphate and a 5'-hydroxyl terminus.. Its function is as follows. Endonuclease that removes tRNA introns. Cleaves pre-tRNA at the 5'- and 3'-splice sites to release the intron. The products are an intron and two tRNA half-molecules bearing 2',3' cyclic phosphate and 5'-OH termini. Recognizes a pseudosymmetric substrate in which 2 bulged loops of 3 bases are separated by a stem of 4 bp. In Thermococcus gammatolerans (strain DSM 15229 / JCM 11827 / EJ3), this protein is tRNA-splicing endonuclease.